The following is a 628-amino-acid chain: Chaperone protein HtpG (628 aa).

Residues 1 to 337 (MSEKKYTFET…SADLPLNVSR (337 aa)) are a; substrate-binding. Residues 338–554 (EILQHNKVID…DYGMSLHMQK (217 aa)) form a b region. The tract at residues 555–628 (MMEEAGQSFM…FVKLVNKYIR (74 aa)) is c.

Belongs to the heat shock protein 90 family. As to quaternary structure, homodimer.

The protein localises to the cytoplasm. Its function is as follows. Molecular chaperone. Has ATPase activity. The polypeptide is Chaperone protein HtpG (Francisella tularensis subsp. tularensis (strain FSC 198)).